Here is a 440-residue protein sequence, read N- to C-terminus: Chromosome partition protein MukF (440 aa).

The interval 208 to 236 (LDETSGNLRELQDTLNAAGDKLQSQLLRI) is leucine-zipper.

This sequence belongs to the MukF family. As to quaternary structure, interacts, and probably forms a ternary complex, with MukE and MukB via its C-terminal region. The complex formation is stimulated by calcium or magnesium. It is required for an interaction between MukE and MukB.

The protein localises to the cytoplasm. Its subcellular location is the nucleoid. Involved in chromosome condensation, segregation and cell cycle progression. May participate in facilitating chromosome segregation by condensation DNA from both sides of a centrally located replisome during cell division. Not required for mini-F plasmid partitioning. Probably acts via its interaction with MukB and MukE. Overexpression results in anucleate cells. It has a calcium binding activity. The sequence is that of Chromosome partition protein MukF from Histophilus somni (strain 2336) (Haemophilus somnus).